A 90-amino-acid chain; its full sequence is Mitochondrial import inner membrane translocase subunit Tim9 (90 aa).

The Twin CX3C motif signature appears at 24-48 (CFNSCVNEFGSRTVSGKEESCANNC). Disulfide bonds link cysteine 24/cysteine 48 and cysteine 28/cysteine 44.

It belongs to the small Tim family. In terms of assembly, heterohexamer; composed of 3 copies of tim-9/tin-9.1 and 3 copies of tim-10/tin-10, named soluble 70 kDa complex. The complex associates with the tim-22 component of the TIM22 complex. Interacts with multi-pass transmembrane proteins in transit.

Its subcellular location is the mitochondrion inner membrane. In terms of biological role, mitochondrial intermembrane chaperone that participates in the import and insertion of multi-pass transmembrane proteins into the mitochondrial inner membrane. May also be required for the transfer of beta-barrel precursors from the TOM complex to the sorting and assembly machinery (SAM complex) of the outer membrane. Acts as a chaperone-like protein that protects the hydrophobic precursors from aggregation and guide them through the mitochondrial intermembrane space. The chain is Mitochondrial import inner membrane translocase subunit Tim9 (tin-9.1) from Caenorhabditis elegans.